The chain runs to 344 residues: Phosphate acyltransferase (344 aa).

The protein belongs to the PlsX family. Homodimer. Probably interacts with PlsY.

The protein resides in the cytoplasm. The enzyme catalyses a fatty acyl-[ACP] + phosphate = an acyl phosphate + holo-[ACP]. It participates in lipid metabolism; phospholipid metabolism. In terms of biological role, catalyzes the reversible formation of acyl-phosphate (acyl-PO(4)) from acyl-[acyl-carrier-protein] (acyl-ACP). This enzyme utilizes acyl-ACP as fatty acyl donor, but not acyl-CoA. The polypeptide is Phosphate acyltransferase (Sodalis glossinidius (strain morsitans)).